A 120-amino-acid chain; its full sequence is UPF0344 protein lin2366 (120 aa).

Helical transmembrane passes span 3–23 (GYVH…ALLI), 33–53 (MLQM…IMMV), 62–82 (ILAI…EMLL), and 92–112 (GMFL…GFYL).

Belongs to the UPF0344 family.

It is found in the cell membrane. The polypeptide is UPF0344 protein lin2366 (Listeria innocua serovar 6a (strain ATCC BAA-680 / CLIP 11262)).